A 953-amino-acid polypeptide reads, in one-letter code: UvrABC system protein A (953 aa).

33 to 40 provides a ligand contact to ATP; sequence GLSGSGKS. 2 consecutive ABC transporter domains span residues 320–599 and 619–949; these read WGST…EESI and GHDN…RYLK. 652–659 is an ATP binding site; that stretch reads GVSGSGKS. Residues 752-778 form a C4-type zinc finger; sequence CEACQGDGLIKIEMHFLPDVYVKCDIC.

This sequence belongs to the ABC transporter superfamily. UvrA family. Forms a heterotetramer with UvrB during the search for lesions.

The protein localises to the cytoplasm. In terms of biological role, the UvrABC repair system catalyzes the recognition and processing of DNA lesions. UvrA is an ATPase and a DNA-binding protein. A damage recognition complex composed of 2 UvrA and 2 UvrB subunits scans DNA for abnormalities. When the presence of a lesion has been verified by UvrB, the UvrA molecules dissociate. This Rickettsia typhi (strain ATCC VR-144 / Wilmington) protein is UvrABC system protein A.